We begin with the raw amino-acid sequence, 1025 residues long: Dihydropyrimidine dehydrogenase [NADP(+)] (1025 aa).

The 32-residue stretch at 69 to 100 folds into the 4Fe-4S ferredoxin-type 1 domain; that stretch reads ERGALREAVRCLKCADAPCQKSCPTSLDIKSF. Positions 79, 82, 87, and 91 each coordinate [4Fe-4S] cluster. Residue Val129 coordinates FAD. The [4Fe-4S] cluster site is built by Cys130, Cys136, Cys140, and Gln156. FAD is bound by residues 194 to 198, 218 to 226, and Arg235; these read GAGPA and EKQEYVGGL. Residues 340–343, 364–365, and Arg371 contribute to the NADP(+) site; these read AGDT and RK. Residue Lys384 is modified to N6-acetyllysine. NADP(+) contacts are provided by residues 437–439 and 481–487; these read PFG and DVVGMAN. Residue 480-489 participates in FAD binding; the sequence is GDVVGMANTT. FMN is bound by residues Ser550 and 574-575; that span reads KT. Substrate contacts are provided by residues Asn609 and 668 to 670; that span reads NLS. The active-site Proton acceptor is Cys671. Lys709 lines the FMN pocket. 736–737 lines the substrate pocket; the sequence is NT. Residues Gly767, 793 to 795, and 816 to 817 contribute to the FMN site; these read TGG and CS. Ser905 is modified (phosphoserine). 2 consecutive 4Fe-4S ferredoxin-type domains span residues 944-976 and 978-1007; these read VVAL…FDPE and HLPT…MVSR. Positions 953, 956, 959, 963, 986, 989, 992, and 996 each coordinate [4Fe-4S] cluster.

Belongs to the dihydropyrimidine dehydrogenase family. Homodimer. The cofactor is FAD. It depends on FMN as a cofactor. [4Fe-4S] cluster serves as cofactor.

It is found in the cytoplasm. It carries out the reaction 5,6-dihydrouracil + NADP(+) = uracil + NADPH + H(+). The catalysed reaction is 5,6-dihydrothymine + NADP(+) = thymine + NADPH + H(+). Its pathway is amino-acid biosynthesis; beta-alanine biosynthesis. Its activity is regulated as follows. Inactivated by 5-iodouracil. Functionally, involved in pyrimidine base degradation. Catalyzes the reduction of uracil and thymine. Also involved the degradation of the chemotherapeutic drug 5-fluorouracil. The chain is Dihydropyrimidine dehydrogenase [NADP(+)] from Rattus norvegicus (Rat).